We begin with the raw amino-acid sequence, 221 residues long: Germin-like protein subfamily 1 member 17 (221 aa).

Residues 1–21 form the signal peptide; it reads MKVSMSLILITLSALVTIAKA. C31 and C48 are oxidised to a cystine. The Cupin type-1 domain maps to 76–213; it reads SNVTTVNVDQ…AFQLDVNVVK (138 aa). A glycan (N-linked (GlcNAc...) asparagine) is linked at N77. Residues H110, H112, E117, and H159 each contribute to the Mn(2+) site.

It belongs to the germin family. As to quaternary structure, oligomer (believed to be a pentamer but probably hexamer).

It localises to the secreted. The protein resides in the extracellular space. Its subcellular location is the apoplast. In terms of biological role, may play a role in plant defense. Probably has no oxalate oxidase activity even if the active site is conserved. The sequence is that of Germin-like protein subfamily 1 member 17 from Arabidopsis thaliana (Mouse-ear cress).